Consider the following 154-residue polypeptide: UPF0178 protein YaiI (154 aa).

It belongs to the UPF0178 family.

The chain is UPF0178 protein YaiI from Escherichia fergusonii (strain ATCC 35469 / DSM 13698 / CCUG 18766 / IAM 14443 / JCM 21226 / LMG 7866 / NBRC 102419 / NCTC 12128 / CDC 0568-73).